The primary structure comprises 262 residues: 14-3-3-like protein GF14-E (262 aa).

Belongs to the 14-3-3 family. In terms of tissue distribution, ubiquitous.

It is found in the cytoplasm. Its subcellular location is the nucleus. Its function is as follows. Is associated with a DNA binding complex that binds to the G box, a well-characterized cis-acting DNA regulatory element found in plant genes. In Oryza sativa subsp. japonica (Rice), this protein is 14-3-3-like protein GF14-E (GF14E).